Here is a 413-residue protein sequence, read N- to C-terminus: MNQKTSLLARIANGSLVLQIISGIILGVILASISTTGANNVAFLGSLFVGALKAIAPILVFVLVASSIANQKKNSQTNMRPIIGLYLLGTFVAALTAVLFSFAFPTTLLLTTGIEGTNPPQGISEVINTLLFKIVDNPVNALLTGNYIGILVWGAGLGITMHHASDSTKRMLSDVSDAVSNIVRFVIRLAPIGIFGLVAATFAETGFDALAGYGQLLMVLVGSMLFIALVINPIIVYVKIKRNPYPLVFKCLRESGVTAFFTRSSAANIPVNMALCEELKLHKDTYSVSIPLGATINMGGAAITITVLTLAAAHTLGIQVDFMTALLLSVIASVSACGASGVAGGSLLLIPLACSLFGISNDVAMQVVAVGFIIGVIQDSAETALNSSTDVIFTAAACEAAEAKEAKQAAQVS.

A run of 9 helical transmembrane segments spans residues 11–31, 43–63, 82–102, 141–161, 192–212, 216–236, 298–318, 339–359, and 363–383; these read IANG…VILA, FLGS…VFVL, IIGL…LFSF, ALLT…GITM, IGIF…ALAG, LLMV…PIIV, MGGA…TLGI, ASGV…LFGI, and VAMQ…SAET.

Belongs to the dicarboxylate/amino acid:cation symporter (DAACS) (TC 2.A.23) family.

The protein resides in the cell inner membrane. It catalyses the reaction L-serine(in) + Na(+)(in) = L-serine(out) + Na(+)(out). The enzyme catalyses L-threonine(in) + Na(+)(in) = L-threonine(out) + Na(+)(out). In terms of biological role, involved in the import of serine and threonine into the cell, with the concomitant import of sodium (symport system). The polypeptide is Serine/threonine transporter SstT (Shewanella frigidimarina (strain NCIMB 400)).